The chain runs to 114 residues: UPF0342 protein OEOE_0901 (114 aa).

The protein belongs to the UPF0342 family.

This Oenococcus oeni (strain ATCC BAA-331 / PSU-1) protein is UPF0342 protein OEOE_0901.